Here is a 397-residue protein sequence, read N- to C-terminus: 2-isopropylmalate synthase 1 (397 aa).

Positions 6-268 (VIVFDTTLRD…VHGINTKEIY (263 aa)) constitute a Pyruvate carboxyltransferase domain. The Mn(2+) site is built by D15, H203, H205, and N239.

This sequence belongs to the alpha-IPM synthase/homocitrate synthase family. LeuA type 1 subfamily. In terms of assembly, homodimer. Mn(2+) is required as a cofactor.

The protein localises to the cytoplasm. It carries out the reaction 3-methyl-2-oxobutanoate + acetyl-CoA + H2O = (2S)-2-isopropylmalate + CoA + H(+). Its pathway is amino-acid biosynthesis; L-leucine biosynthesis; L-leucine from 3-methyl-2-oxobutanoate: step 1/4. In terms of biological role, catalyzes the condensation of the acetyl group of acetyl-CoA with 3-methyl-2-oxobutanoate (2-ketoisovalerate) to form 3-carboxy-3-hydroxy-4-methylpentanoate (2-isopropylmalate). The protein is 2-isopropylmalate synthase 1 of Caldanaerobacter subterraneus subsp. tengcongensis (strain DSM 15242 / JCM 11007 / NBRC 100824 / MB4) (Thermoanaerobacter tengcongensis).